Reading from the N-terminus, the 523-residue chain is Monocarboxylate transporter 7 (523 aa).

At 1-21 (MTQNKLKLCSKANVYTEVPDG) the chain is on the cytoplasmic side. The helical transmembrane segment at 22–42 (GWGWAVAVSFFFVEVFTYGII) threads the bilayer. Residues 43–62 (KTFGVFFNDLMDSFNESNSR) lie on the Extracellular side of the membrane. A helical transmembrane segment spans residues 63 to 83 (ISWIISICVFVLTFSAPLATV). The Cytoplasmic portion of the chain corresponds to 84-91 (LSNRFGHR). Residues 92 to 112 (LVVMLGGLLVSTGMVAASFSQ) form a helical membrane-spanning segment. The Extracellular segment spans residues 113–118 (EVSHMY). Residues 119–139 (VAIGIISGLGYCFSFLPTVTI) form a helical membrane-spanning segment. Over 140–149 (LSQYFGKRRS) the chain is Cytoplasmic. A helical membrane pass occupies residues 150–170 (IVTAVASTGECFAVFAFAPAI). Residues 171–184 (MALKERIGWRYSLL) are Extracellular-facing. The chain crosses the membrane as a helical span at residues 185 to 205 (FVGLLQLNIVIFGALLRPIFI). The Cytoplasmic portion of the chain corresponds to 206–299 (RGPASPKIVI…KEKSFICYAL (94 aa)). 4 positions are modified to phosphoserine: Ser-234, Ser-237, Ser-240, and Ser-247. The chain crosses the membrane as a helical span at residues 300–320 (FGLFATLGFFAPSLYIIPLGI). The Extracellular portion of the chain corresponds to 321 to 330 (SLGIDQDRAA). A helical transmembrane segment spans residues 331-351 (FLLSTMAIAEVFGRIGAGFVL). Over 352-358 (NREPIRK) the chain is Cytoplasmic. A helical transmembrane segment spans residues 359–379 (IYIELICVILLTVSLFAFTFA). Residues 380-381 (TE) lie on the Extracellular side of the membrane. The chain crosses the membrane as a helical span at residues 382 to 402 (FWGLMSCSIFFGFMVGTIGGT). At 403–423 (HIPLLAEDDVVGIEKMSSAAG) the chain is on the cytoplasmic side. A helical transmembrane segment spans residues 424 to 444 (VYIFIQSIAGLAGPPLAGLLV). The Extracellular segment spans residues 445–452 (DQSKIYSR). The chain crosses the membrane as a helical span at residues 453–473 (AFYSCAAGMALAAVCLALVRP). The Cytoplasmic portion of the chain corresponds to 474–523 (CKMGLCQHHHSGETKVVSHRGKTLQDIPEDFLEMDLAKNEHRVHVQMEPV).

It belongs to the major facilitator superfamily. Monocarboxylate porter (TC 2.A.1.13) family. As to quaternary structure, forms functional complexes with BSG/CD147 or EMB/GP70 ancillary proteins.

The protein localises to the basolateral cell membrane. It catalyses the reaction taurine(out) = taurine(in). Functionally, monocarboxylate transporter selective for taurine. May associate with BSG/CD147 or EMB/GP70 ancillary proteins to mediate facilitative efflux or influx of taurine across the plasma membrane. The transport is pH- and sodium-independent. Rather low-affinity, is likely effective for taurine transport in tissues where taurine is present at high concentrations. In Homo sapiens (Human), this protein is Monocarboxylate transporter 7.